The chain runs to 215 residues: NADH-quinone oxidoreductase subunit C (215 aa).

This sequence belongs to the complex I 30 kDa subunit family. In terms of assembly, NDH-1 is composed of 14 different subunits. Subunits NuoB, C, D, E, F, and G constitute the peripheral sector of the complex.

It is found in the cell inner membrane. It carries out the reaction a quinone + NADH + 5 H(+)(in) = a quinol + NAD(+) + 4 H(+)(out). Functionally, NDH-1 shuttles electrons from NADH, via FMN and iron-sulfur (Fe-S) centers, to quinones in the respiratory chain. The immediate electron acceptor for the enzyme in this species is believed to be ubiquinone. Couples the redox reaction to proton translocation (for every two electrons transferred, four hydrogen ions are translocated across the cytoplasmic membrane), and thus conserves the redox energy in a proton gradient. The sequence is that of NADH-quinone oxidoreductase subunit C from Bordetella parapertussis (strain 12822 / ATCC BAA-587 / NCTC 13253).